The sequence spans 391 residues: Zinc finger protein DPF3 (391 aa).

Positions 152–165 (ENGDGFHDDEDFEV) are enriched in acidic residues. Disordered stretches follow at residues 152–200 (ENGD…PYVC) and 236–266 (LAEEEGEEERETEIPQSPPVHHENHKPQKAP). Over residues 169 to 183 (KRKHRNKGRGRGSGR) the composition is skewed to basic residues. The C2H2-type zinc finger occupies 198 to 235 (YVCDNRYKQKHNSKTADSVCGKRYKNRPGLSYHYAHTH). 2 consecutive PHD-type zinc fingers follow at residues 273–333 (NDYC…CKSC) and 330–380 (CKSC…CQNL).

Component of the BAF complex. Interacts with acetylated histones H3 and H4. Component of neuron-specific chromatin remodeling complex (nBAF complex), a subfamily of ATP-dependent SWI/SNF chromatin remodeling complexes. In terms of tissue distribution, expressed in the heart and somites.

The protein localises to the nucleus. In terms of biological role, muscle-specific component of the BAF complex, a multiprotein complex involved in transcriptional activation and repression of select genes by chromatin remodeling (alteration of DNA-nucleosome topology). Specifically binds acetylated lysines on histone 3 and 4. In the complex, it acts as a tissue-specific anchor between histone acetylations and methylations and chromatin remodeling. Belongs to the neuron-specific chromatin remodeling complex (nBAF complex) and may play a role in neural development. Plays an essential role in heart and skeletal muscle development. This Danio rerio (Zebrafish) protein is Zinc finger protein DPF3 (dpf3).